The primary structure comprises 553 residues: Phospholipase-B 81 (553 aa).

Positions 1-35 (MVRFGSAASSDNRRRRCWSWYWGGLLLLWAVAETR) are cleaved as a signal peptide. N-linked (GlcNAc...) asparagine glycans are attached at residues asparagine 69, asparagine 313, asparagine 416, and asparagine 531.

This sequence belongs to the phospholipase B-like family. Expressed by the venom gland.

Its subcellular location is the secreted. May cause hemolysis. This chain is Phospholipase-B 81, found in Drysdalia coronoides (White-lipped snake).